Here is a 312-residue protein sequence, read N- to C-terminus: DNA-directed RNA polymerase subunit alpha (312 aa).

Positions 1 to 229 (MLQYQIDRIE…ELFQPLATVT (229 aa)) are alpha N-terminal domain (alpha-NTD). The alpha C-terminal domain (alpha-CTD) stretch occupies residues 245–312 (QIPLEELNLS…ISIPQSRTSA (68 aa)).

This sequence belongs to the RNA polymerase alpha chain family. In terms of assembly, in cyanobacteria the RNAP catalytic core is composed of 2 alpha, 1 beta, 1 beta', 1 gamma and 1 omega subunit. When a sigma factor is associated with the core the holoenzyme is formed, which can initiate transcription.

It carries out the reaction RNA(n) + a ribonucleoside 5'-triphosphate = RNA(n+1) + diphosphate. Functionally, DNA-dependent RNA polymerase catalyzes the transcription of DNA into RNA using the four ribonucleoside triphosphates as substrates. This Prochlorococcus marinus (strain MIT 9313) protein is DNA-directed RNA polymerase subunit alpha.